Here is a 404-residue protein sequence, read N- to C-terminus: Pyrophosphate--fructose 6-phosphate 1-phosphotransferase (404 aa).

A diphosphate-binding site is contributed by Gly13. Asn108 is a binding site for Mg(2+). Substrate is bound by residues 136 to 138 (TID), 180 to 182 (MGR), Glu237, and 295 to 298 (YLQR). Catalysis depends on Asp138, which acts as the Proton acceptor.

It belongs to the phosphofructokinase type A (PFKA) family. PPi-dependent PFK group II subfamily. Clade 'B2' sub-subfamily. In terms of assembly, homodimer. Requires Mg(2+) as cofactor.

Its subcellular location is the cytoplasm. It carries out the reaction beta-D-fructose 6-phosphate + diphosphate = beta-D-fructose 1,6-bisphosphate + phosphate + H(+). Its pathway is carbohydrate degradation; glycolysis; D-glyceraldehyde 3-phosphate and glycerone phosphate from D-glucose: step 3/4. Its activity is regulated as follows. Non-allosteric. Its function is as follows. Catalyzes the phosphorylation of D-fructose 6-phosphate, the first committing step of glycolysis. Uses inorganic phosphate (PPi) as phosphoryl donor instead of ATP like common ATP-dependent phosphofructokinases (ATP-PFKs), which renders the reaction reversible, and can thus function both in glycolysis and gluconeogenesis. Consistently, PPi-PFK can replace the enzymes of both the forward (ATP-PFK) and reverse (fructose-bisphosphatase (FBPase)) reactions. This is Pyrophosphate--fructose 6-phosphate 1-phosphotransferase from Rhodospirillum rubrum (strain ATCC 11170 / ATH 1.1.1 / DSM 467 / LMG 4362 / NCIMB 8255 / S1).